Consider the following 227-residue polypeptide: Cytochrome c oxidase subunit 2 (227 aa).

The Mitochondrial intermembrane portion of the chain corresponds to 1–14 (MAHPVQLSLQDATS). Residues 15–45 (PVMEELITFHDHAFMAMSLISFLVLYALLST) form a helical membrane-spanning segment. The Mitochondrial matrix segment spans residues 46-59 (LTTKLTNTSITDAQ). Residues 60 to 87 (EMETIWTILPAIILILIALPSLRILYLT) traverse the membrane as a helical segment. The Mitochondrial intermembrane portion of the chain corresponds to 88-227 (DEVNDPSFTI…IFEMGPVLTL (140 aa)). Cu cation-binding residues include histidine 161, cysteine 196, glutamate 198, cysteine 200, histidine 204, and methionine 207. Glutamate 198 is a binding site for Mg(2+).

The protein belongs to the cytochrome c oxidase subunit 2 family. Component of the cytochrome c oxidase (complex IV, CIV), a multisubunit enzyme composed of 14 subunits. The complex is composed of a catalytic core of 3 subunits MT-CO1, MT-CO2 and MT-CO3, encoded in the mitochondrial DNA, and 11 supernumerary subunits COX4I, COX5A, COX5B, COX6A, COX6B, COX6C, COX7A, COX7B, COX7C, COX8 and NDUFA4, which are encoded in the nuclear genome. The complex exists as a monomer or a dimer and forms supercomplexes (SCs) in the inner mitochondrial membrane with NADH-ubiquinone oxidoreductase (complex I, CI) and ubiquinol-cytochrome c oxidoreductase (cytochrome b-c1 complex, complex III, CIII), resulting in different assemblies (supercomplex SCI(1)III(2)IV(1) and megacomplex MCI(2)III(2)IV(2)). Found in a complex with TMEM177, COA6, COX18, COX20, SCO1 and SCO2. Interacts with TMEM177 in a COX20-dependent manner. Interacts with COX20. Interacts with COX16. Requires Cu cation as cofactor.

It is found in the mitochondrion inner membrane. It catalyses the reaction 4 Fe(II)-[cytochrome c] + O2 + 8 H(+)(in) = 4 Fe(III)-[cytochrome c] + 2 H2O + 4 H(+)(out). Functionally, component of the cytochrome c oxidase, the last enzyme in the mitochondrial electron transport chain which drives oxidative phosphorylation. The respiratory chain contains 3 multisubunit complexes succinate dehydrogenase (complex II, CII), ubiquinol-cytochrome c oxidoreductase (cytochrome b-c1 complex, complex III, CIII) and cytochrome c oxidase (complex IV, CIV), that cooperate to transfer electrons derived from NADH and succinate to molecular oxygen, creating an electrochemical gradient over the inner membrane that drives transmembrane transport and the ATP synthase. Cytochrome c oxidase is the component of the respiratory chain that catalyzes the reduction of oxygen to water. Electrons originating from reduced cytochrome c in the intermembrane space (IMS) are transferred via the dinuclear copper A center (CU(A)) of subunit 2 and heme A of subunit 1 to the active site in subunit 1, a binuclear center (BNC) formed by heme A3 and copper B (CU(B)). The BNC reduces molecular oxygen to 2 water molecules using 4 electrons from cytochrome c in the IMS and 4 protons from the mitochondrial matrix. The polypeptide is Cytochrome c oxidase subunit 2 (MT-CO2) (Macaca mulatta (Rhesus macaque)).